A 172-amino-acid chain; its full sequence is MKLGIVIFPSKMIQDKANGLRKRYDPHYALVPPHITLKAPFEAPEEQLETIVKELRTIANKTNPFTLHVGKVGSFAPVNNVIYFKVEKTPELTFLNEEMHKGFLTQEREYAFVPHLTIAQKLSDAEHADILGRLRMKDFYYEQTIDRFHLLYQLENETWNVHETFHLGKGSK.

His-34 serves as the catalytic Proton donor. 2 short sequence motifs (HXTX) span residues 34 to 37 (HITL) and 115 to 118 (HLTI). Residue His-115 is the Proton acceptor of the active site.

It belongs to the 2H phosphoesterase superfamily. YjcG family.

This is Putative phosphoesterase Bcer98_0945 from Bacillus cytotoxicus (strain DSM 22905 / CIP 110041 / 391-98 / NVH 391-98).